A 123-amino-acid polypeptide reads, in one-letter code: MSTLSNFTQTLEDVFRRIFITYMDNWRQNTTAEQEALQAKVDAENFYYVILYLMVMIGMFSFIIVAILVSTVKSKRREHSNDPYHQYIVEDWQEKYKSQILNLEESKATIHENIGAAGFKMSP.

N-linked (GlcNAc...) asparagine glycosylation is found at Asn-6 and Asn-29. Residues 49-69 (VILYLMVMIGMFSFIIVAILV) form a helical membrane-spanning segment. At 70-123 (STVKSKRREHSNDPYHQYIVEDWQEKYKSQILNLEESKATIHENIGAAGFKMSP) the chain is on the cytoplasmic side.

Belongs to the potassium channel KCNE family. In terms of assembly, interacts with KCNB1. Associates with KCNH2/ERG1. May associate with KCNQ2 and KCNQ3. Associates with HCN1 and probably HCN2. Heteromultimer with KCNC2. Interacts with KCNC2. Interacts with KCNQ1; forms a heterooligomer complex that targets to the membrane raft and leading to currents with an apparently instantaneous activation, a rapid deactivation process and a linear current-voltage relationship and decreases the amplitude of the outward current. In terms of tissue distribution, highly expressed in brain, heart, skeletal muscle, pancreas, placenta, kidney, colon and thymus. A small but significant expression is found in liver, ovary, testis, prostate, small intestine and leukocytes. Very low expression, nearly undetectable, in lung and spleen.

The protein resides in the cell membrane. It is found in the apical cell membrane. Ancillary protein that functions as a regulatory subunit of the voltage-gated potassium (Kv) channel complex composed of pore-forming and potassium-conducting alpha subunits and of regulatory beta subunits. KCNE2 beta subunit modulates the gating kinetics and enhances stability of the channel complex. Alters the gating of the delayed rectifier Kv channel containing KCNB1 alpha subunit. Associates with KCNH2/HERG alpha subunit Kv channel to form the rapidly activating component of the delayed rectifying potassium current (IKr) in heart. May associate with KCNQ2 and/or KCNQ3 alpha subunits to modulate the native M-type current. May associate with HCN1 and HCN2 channel subunits to increase potassium current. Forms a heterooligomer complex with KCNQ1/KVLQT1 alpha subunits which leads to currents with an apparently instantaneous activation, a rapid deactivation process and a linear current-voltage relationship and decreases the amplitude of the outward current. KCNQ1-KCNE2 channel associates with Na(+)-coupled myo-inositol symporter in the apical membrane of choroid plexus epithelium and regulates the myo-inositol gradient between blood and cerebrospinal fluid with an impact on neuron excitability. The protein is Potassium voltage-gated channel subfamily E member 2 of Homo sapiens (Human).